Here is a 639-residue protein sequence, read N- to C-terminus: Extracellular metalloproteinase 1 (639 aa).

The first 19 residues, Met-1–Ala-19, serve as a signal peptide directing secretion. Residues His-20–His-250 constitute a propeptide that is removed on maturation. An N-linked (GlcNAc...) asparagine glycan is attached at Asn-291. Residue His-434 coordinates Zn(2+). Glu-435 is a catalytic residue. His-438 is a binding site for Zn(2+). An N-linked (GlcNAc...) asparagine glycan is attached at Asn-598.

The protein belongs to the peptidase M36 family. Requires Zn(2+) as cofactor.

It localises to the secreted. Secreted metalloproteinase probably acting as a virulence factor. This is Extracellular metalloproteinase 1 (MEP1) from Arthroderma otae (strain ATCC MYA-4605 / CBS 113480) (Microsporum canis).